The primary structure comprises 403 residues: Argininosuccinate synthase (403 aa).

ATP contacts are provided by residues 13 to 21 (AYSGGLDTS) and A40. L-citrulline contacts are provided by Y92 and S97. G122 provides a ligand contact to ATP. The L-aspartate site is built by T124, N128, and D129. An L-citrulline-binding site is contributed by N128. Residues R132, S181, S190, E266, and Y278 each coordinate L-citrulline.

Belongs to the argininosuccinate synthase family. Type 1 subfamily. As to quaternary structure, homotetramer.

The protein resides in the cytoplasm. It catalyses the reaction L-citrulline + L-aspartate + ATP = 2-(N(omega)-L-arginino)succinate + AMP + diphosphate + H(+). It participates in amino-acid biosynthesis; L-arginine biosynthesis; L-arginine from L-ornithine and carbamoyl phosphate: step 2/3. The protein is Argininosuccinate synthase of Aliivibrio salmonicida (strain LFI1238) (Vibrio salmonicida (strain LFI1238)).